Here is a 119-residue protein sequence, read N- to C-terminus: Glucitol operon activator protein (119 aa).

The H-T-H motif DNA-binding region spans 23–29 (QISRFNR).

In terms of biological role, positive regulator for glucitol operon expression. In Escherichia coli (strain K12), this protein is Glucitol operon activator protein (gutM).